Here is a 473-residue protein sequence, read N- to C-terminus: 3-isopropylmalate dehydratase large subunit (473 aa).

Residues Cys-354, Cys-414, and Cys-417 each contribute to the [4Fe-4S] cluster site.

The protein belongs to the aconitase/IPM isomerase family. LeuC type 1 subfamily. In terms of assembly, heterodimer of LeuC and LeuD. [4Fe-4S] cluster serves as cofactor.

The enzyme catalyses (2R,3S)-3-isopropylmalate = (2S)-2-isopropylmalate. It functions in the pathway amino-acid biosynthesis; L-leucine biosynthesis; L-leucine from 3-methyl-2-oxobutanoate: step 2/4. Functionally, catalyzes the isomerization between 2-isopropylmalate and 3-isopropylmalate, via the formation of 2-isopropylmaleate. This is 3-isopropylmalate dehydratase large subunit from Rhodopseudomonas palustris (strain BisB18).